The following is a 108-amino-acid chain: Iron-sulfur cluster assembly protein CyaY (108 aa).

Belongs to the frataxin family.

In terms of biological role, involved in iron-sulfur (Fe-S) cluster assembly. May act as a regulator of Fe-S biogenesis. The protein is Iron-sulfur cluster assembly protein CyaY of Burkholderia cenocepacia (strain ATCC BAA-245 / DSM 16553 / LMG 16656 / NCTC 13227 / J2315 / CF5610) (Burkholderia cepacia (strain J2315)).